We begin with the raw amino-acid sequence, 131 residues long: MTAANQNYGTGRRKSSSARVFIKPGNGNITINQRSLDVYFGRETSRMVVRQPLELVELLDKLDLYITVKGGGISGQAGAIRHGITRALMEYDETLRPALRAAGFVTRDARRVERKKVGLHKARRRPQYSKR.

Belongs to the universal ribosomal protein uS9 family.

The sequence is that of Small ribosomal subunit protein uS9 from Actinobacillus pleuropneumoniae serotype 7 (strain AP76).